We begin with the raw amino-acid sequence, 64 residues long: Small ribosomal subunit protein eS17 (64 aa).

Belongs to the eukaryotic ribosomal protein eS17 family.

In Methanospirillum hungatei JF-1 (strain ATCC 27890 / DSM 864 / NBRC 100397 / JF-1), this protein is Small ribosomal subunit protein eS17.